A 259-amino-acid chain; its full sequence is Phosphoribosylaminoimidazole-succinocarboxamide synthase (259 aa).

The protein belongs to the SAICAR synthetase family.

It carries out the reaction 5-amino-1-(5-phospho-D-ribosyl)imidazole-4-carboxylate + L-aspartate + ATP = (2S)-2-[5-amino-1-(5-phospho-beta-D-ribosyl)imidazole-4-carboxamido]succinate + ADP + phosphate + 2 H(+). It functions in the pathway purine metabolism; IMP biosynthesis via de novo pathway; 5-amino-1-(5-phospho-D-ribosyl)imidazole-4-carboxamide from 5-amino-1-(5-phospho-D-ribosyl)imidazole-4-carboxylate: step 1/2. In Zymomonas mobilis subsp. mobilis (strain ATCC 31821 / ZM4 / CP4), this protein is Phosphoribosylaminoimidazole-succinocarboxamide synthase.